We begin with the raw amino-acid sequence, 123 residues long: Large ribosomal subunit protein uL14 (123 aa).

The protein belongs to the universal ribosomal protein uL14 family. In terms of assembly, part of the 50S ribosomal subunit. Forms a cluster with proteins L3 and L19. In the 70S ribosome, L14 and L19 interact and together make contacts with the 16S rRNA in bridges B5 and B8.

Its function is as follows. Binds to 23S rRNA. Forms part of two intersubunit bridges in the 70S ribosome. The polypeptide is Large ribosomal subunit protein uL14 (Corynebacterium jeikeium (strain K411)).